Reading from the N-terminus, the 260-residue chain is Indole-3-glycerol phosphate synthase (260 aa).

It belongs to the TrpC family.

It catalyses the reaction 1-(2-carboxyphenylamino)-1-deoxy-D-ribulose 5-phosphate + H(+) = (1S,2R)-1-C-(indol-3-yl)glycerol 3-phosphate + CO2 + H2O. It participates in amino-acid biosynthesis; L-tryptophan biosynthesis; L-tryptophan from chorismate: step 4/5. This is Indole-3-glycerol phosphate synthase from Neisseria gonorrhoeae (strain NCCP11945).